A 330-amino-acid polypeptide reads, in one-letter code: Aspartate--ammonia ligase (330 aa).

Belongs to the class-II aminoacyl-tRNA synthetase family. AsnA subfamily.

Its subcellular location is the cytoplasm. The catalysed reaction is L-aspartate + NH4(+) + ATP = L-asparagine + AMP + diphosphate + H(+). Its pathway is amino-acid biosynthesis; L-asparagine biosynthesis; L-asparagine from L-aspartate (ammonia route): step 1/1. The polypeptide is Aspartate--ammonia ligase (Pectobacterium carotovorum subsp. carotovorum (strain PC1)).